Here is a 434-residue protein sequence, read N- to C-terminus: Trigger factor (434 aa).

Residues 161 to 246 (EDRATLDFTG…LKKVEVRELP (86 aa)) form the PPIase FKBP-type domain.

Belongs to the FKBP-type PPIase family. Tig subfamily.

Its subcellular location is the cytoplasm. It catalyses the reaction [protein]-peptidylproline (omega=180) = [protein]-peptidylproline (omega=0). Involved in protein export. Acts as a chaperone by maintaining the newly synthesized protein in an open conformation. Functions as a peptidyl-prolyl cis-trans isomerase. The sequence is that of Trigger factor from Yersinia pseudotuberculosis serotype O:1b (strain IP 31758).